A 356-amino-acid chain; its full sequence is Galactosylgalactosylxylosylprotein 3-beta-glucuronosyltransferase sqv-8 (356 aa).

Residues 1-9 (MFPSRLLEK) are Cytoplasmic-facing. Residues 10 to 30 (WWLRAFIALVIFFVWQLFYAI) traverse the membrane as a helical; Signal-anchor for type II membrane protein segment. Over 31–356 (NRVQSLEEER…LEAHALGVDN (326 aa)) the chain is Lumenal. Asn-93 and Asn-173 each carry an N-linked (GlcNAc...) asparagine glycan. Asp-208 contributes to the Mn(2+) binding site. Residues Asn-246 and Asn-272 are each glycosylated (N-linked (GlcNAc...) asparagine). The Proton acceptor role is filled by Glu-294.

Belongs to the glycosyltransferase 43 family.

It is found in the membrane. The catalysed reaction is 3-O-(beta-D-galactosyl-(1-&gt;3)-beta-D-galactosyl-(1-&gt;4)-beta-D-xylosyl)-L-seryl-[protein] + UDP-alpha-D-glucuronate = 3-O-(beta-D-GlcA-(1-&gt;3)-beta-D-Gal-(1-&gt;3)-beta-D-Gal-(1-&gt;4)-beta-D-Xyl)-L-seryl-[protein] + UDP + H(+). Its function is as follows. Glycosyltransferase required for the biosynthesis of the tetrasaccharide (GlcA-Gal-Gal-Xyl-)Ser core linker of heparan sulfate and chondroitin sulfate. May be involved in the biosynthesis of the HNK-1 carbohydrate epitope on glycoproteins. Required for embryonic development. Involved in the elongation of the pharyngeal isthmus during the later stages of embryonic development. Involved in vulval epithelium invagination. This is Galactosylgalactosylxylosylprotein 3-beta-glucuronosyltransferase sqv-8 (sqv-8) from Caenorhabditis elegans.